A 401-amino-acid polypeptide reads, in one-letter code: Argininosuccinate synthase (401 aa).

Residues 7 to 15 and A34 contribute to the ATP site; that span reads AYSGGLDTS. L-citrulline-binding residues include Y85 and S90. G115 is an ATP binding site. Residues T117, N121, and D122 each coordinate L-aspartate. N121 is a binding site for L-citrulline. R125, S174, S183, E259, and Y271 together coordinate L-citrulline.

It belongs to the argininosuccinate synthase family. Type 1 subfamily. As to quaternary structure, homotetramer.

It is found in the cytoplasm. It catalyses the reaction L-citrulline + L-aspartate + ATP = 2-(N(omega)-L-arginino)succinate + AMP + diphosphate + H(+). It functions in the pathway amino-acid biosynthesis; L-arginine biosynthesis; L-arginine from L-ornithine and carbamoyl phosphate: step 2/3. In Desulforamulus reducens (strain ATCC BAA-1160 / DSM 100696 / MI-1) (Desulfotomaculum reducens), this protein is Argininosuccinate synthase.